The sequence spans 62 residues: Potassium channel toxin kappa-KTx 3.2 (62 aa).

Positions methionine 1–alanine 26 are cleaved as a signal peptide. Residues glutamate 27–glutamate 36 constitute a propeptide that is removed on maturation. 2 disulfide bridges follow: cysteine 43/cysteine 61 and cysteine 47/cysteine 57.

This sequence belongs to the short scorpion toxin superfamily. Potassium channel inhibitor kappa-KTx family. Kappa-KTx 3 subfamily. As to expression, expressed by the venom gland.

It localises to the secreted. Functionally, potassium channel inhibitor (Kv). This Heterometrus petersii (Asian forest scorpion) protein is Potassium channel toxin kappa-KTx 3.2.